Consider the following 379-residue polypeptide: Oxidized polyvinyl alcohol hydrolase (379 aa).

A signal peptide spans 1 to 23 (MNQSLGVLRLTRGVIALALASVA). Residues Ser203 and Ser309 each act as charge relay system in the active site.

The protein belongs to the peptidase S9A family. As to quaternary structure, monomer.

The catalysed reaction is nonane-4,6-dione + H2O = pentan-2-one + butanoate + H(+). In terms of biological role, catalyzes the hydrolysis of 4,6-nonanedione, a beta-diketone compound. Also mediates hydrolysis of oxidized polyvinyl alcohol (PVA) in the second step in the degradation of polyvinyl alcohol. Not active toward the monoketone structure. The protein is Oxidized polyvinyl alcohol hydrolase (pvaB) of Pseudomonas sp.